The chain runs to 349 residues: D-alanine--D-alanine ligase (349 aa).

The ATP-grasp domain occupies 133 to 335 (QVLESATTIP…YSVLIEELVS (203 aa)). Residue 163 to 218 (EEKLIYPVFVKPANMGSSVGISKAENRTDLKQAIALALKYDSRVLIEQGVDAREIE) coordinates ATP. Mg(2+)-binding residues include Asp289, Glu302, and Asn304.

Belongs to the D-alanine--D-alanine ligase family. Requires Mg(2+) as cofactor. Mn(2+) is required as a cofactor.

Its subcellular location is the cytoplasm. It carries out the reaction 2 D-alanine + ATP = D-alanyl-D-alanine + ADP + phosphate + H(+). It functions in the pathway cell wall biogenesis; peptidoglycan biosynthesis. Its function is as follows. Cell wall formation. The protein is D-alanine--D-alanine ligase of Streptococcus mutans serotype c (strain ATCC 700610 / UA159).